A 206-amino-acid polypeptide reads, in one-letter code: Thiamine-phosphate synthase (206 aa).

Residues Q38 to K42 and N70 contribute to the 4-amino-2-methyl-5-(diphosphooxymethyl)pyrimidine site. 2 residues coordinate Mg(2+): D71 and D90. T109 is a 4-amino-2-methyl-5-(diphosphooxymethyl)pyrimidine binding site. Residue T135 to T137 coordinates 2-[(2R,5Z)-2-carboxy-4-methylthiazol-5(2H)-ylidene]ethyl phosphate. Residue K138 participates in 4-amino-2-methyl-5-(diphosphooxymethyl)pyrimidine binding. 2-[(2R,5Z)-2-carboxy-4-methylthiazol-5(2H)-ylidene]ethyl phosphate is bound by residues G165 and V185–S186.

It belongs to the thiamine-phosphate synthase family. The cofactor is Mg(2+).

The enzyme catalyses 2-[(2R,5Z)-2-carboxy-4-methylthiazol-5(2H)-ylidene]ethyl phosphate + 4-amino-2-methyl-5-(diphosphooxymethyl)pyrimidine + 2 H(+) = thiamine phosphate + CO2 + diphosphate. The catalysed reaction is 2-(2-carboxy-4-methylthiazol-5-yl)ethyl phosphate + 4-amino-2-methyl-5-(diphosphooxymethyl)pyrimidine + 2 H(+) = thiamine phosphate + CO2 + diphosphate. It catalyses the reaction 4-methyl-5-(2-phosphooxyethyl)-thiazole + 4-amino-2-methyl-5-(diphosphooxymethyl)pyrimidine + H(+) = thiamine phosphate + diphosphate. It participates in cofactor biosynthesis; thiamine diphosphate biosynthesis; thiamine phosphate from 4-amino-2-methyl-5-diphosphomethylpyrimidine and 4-methyl-5-(2-phosphoethyl)-thiazole: step 1/1. Condenses 4-methyl-5-(beta-hydroxyethyl)thiazole monophosphate (THZ-P) and 2-methyl-4-amino-5-hydroxymethyl pyrimidine pyrophosphate (HMP-PP) to form thiamine monophosphate (TMP). The sequence is that of Thiamine-phosphate synthase from Fusobacterium nucleatum subsp. nucleatum (strain ATCC 25586 / DSM 15643 / BCRC 10681 / CIP 101130 / JCM 8532 / KCTC 2640 / LMG 13131 / VPI 4355).